A 344-amino-acid chain; its full sequence is L-rhamnose-proton symporter (344 aa).

10 helical membrane passes run 4 to 24 (AITM…CFYA), 38 to 58 (WSVG…ALLL), 68 to 88 (FSLS…IGNI), 101 to 121 (MGIG…TPII), 137 to 157 (TLLG…AGQL), 175 to 195 (LVLA…MNAA), 214 to 234 (LPSY…FCFI), 259 to 279 (VLLS…YAWG), 290 to 310 (ISWM…GLVL), and 323 to 343 (VLSL…IGMA).

It belongs to the L-rhamnose transporter (TC 2.A.7.6) family.

It localises to the cell inner membrane. It carries out the reaction L-rhamnopyranose(in) + H(+)(in) = L-rhamnopyranose(out) + H(+)(out). Its function is as follows. Uptake of L-rhamnose across the cytoplasmic membrane with the concomitant transport of protons into the cell (symport system). The chain is L-rhamnose-proton symporter from Shigella boydii serotype 18 (strain CDC 3083-94 / BS512).